The primary structure comprises 303 residues: Aliphatic sulfonates import ATP-binding protein SsuB (303 aa).

Residues 39 to 263 enclose the ABC transporter domain; the sequence is LHVRQVVKRY…ERGAAGFAQL (225 aa). 71-78 is an ATP binding site; it reads GRSGCGKS.

It belongs to the ABC transporter superfamily. Aliphatic sulfonates importer (TC 3.A.1.17.2) family. As to quaternary structure, the complex is composed of two ATP-binding proteins (SsuB), two transmembrane proteins (SsuC) and a solute-binding protein (SsuA).

The protein resides in the cell inner membrane. It carries out the reaction ATP + H2O + aliphatic sulfonate-[sulfonate-binding protein]Side 1 = ADP + phosphate + aliphatic sulfonateSide 2 + [sulfonate-binding protein]Side 1.. In terms of biological role, part of the ABC transporter complex SsuABC involved in aliphatic sulfonates import. Responsible for energy coupling to the transport system. The polypeptide is Aliphatic sulfonates import ATP-binding protein SsuB (Cupriavidus necator (strain ATCC 17699 / DSM 428 / KCTC 22496 / NCIMB 10442 / H16 / Stanier 337) (Ralstonia eutropha)).